The sequence spans 351 residues: Protein RecA (351 aa).

68–75 (GPESSGKT) is an ATP binding site.

The protein belongs to the RecA family.

It localises to the cytoplasm. Can catalyze the hydrolysis of ATP in the presence of single-stranded DNA, the ATP-dependent uptake of single-stranded DNA by duplex DNA, and the ATP-dependent hybridization of homologous single-stranded DNAs. It interacts with LexA causing its activation and leading to its autocatalytic cleavage. This chain is Protein RecA, found in Chloroflexus aggregans (strain MD-66 / DSM 9485).